We begin with the raw amino-acid sequence, 69 residues long: Toxin Lc a (69 aa).

4 cysteine pairs are disulfide-bonded: cysteine 3–cysteine 20, cysteine 13–cysteine 41, cysteine 45–cysteine 56, and cysteine 57–cysteine 62.

It belongs to the three-finger toxin family. Long-chain subfamily. Type II alpha-neurotoxin sub-subfamily. As to expression, expressed by the venom gland.

Its subcellular location is the secreted. In terms of biological role, binds with high affinity to muscular nicotinic acetylcholine receptors (nAChRs), whereas it binds with a low affinity to neuronal alpha-7/CHRNA7 nAChRs. The sequence is that of Toxin Lc a from Laticauda colubrina (Yellow-lipped sea krait).